A 45-amino-acid chain; its full sequence is Large ribosomal subunit protein bL34 (45 aa).

Residues 23-45 (ETPGGKKVLSARRAKGRKNLIAK) form a disordered region. Residues 31 to 45 (LSARRAKGRKNLIAK) show a composition bias toward basic residues.

The protein belongs to the bacterial ribosomal protein bL34 family.

The polypeptide is Large ribosomal subunit protein bL34 (Elusimicrobium minutum (strain Pei191)).